The chain runs to 532 residues: Phosphoenolpyruvate carboxykinase (ATP) (532 aa).

Arg60, Tyr195, and Lys201 together coordinate substrate. ATP-binding positions include Lys201, His221, and 237-245; that span reads GLSGTGKTT. Residues Lys201 and His221 each contribute to the Mn(2+) site. Residue Asp258 participates in Mn(2+) binding. 3 residues coordinate ATP: Glu287, Arg323, and Thr448. Arg323 is a substrate binding site.

The protein belongs to the phosphoenolpyruvate carboxykinase (ATP) family. The cofactor is Mn(2+).

It localises to the cytoplasm. It carries out the reaction oxaloacetate + ATP = phosphoenolpyruvate + ADP + CO2. The protein operates within carbohydrate biosynthesis; gluconeogenesis. Its function is as follows. Involved in the gluconeogenesis. Catalyzes the conversion of oxaloacetate (OAA) to phosphoenolpyruvate (PEP) through direct phosphoryl transfer between the nucleoside triphosphate and OAA. This is Phosphoenolpyruvate carboxykinase (ATP) from Christiangramia forsetii (strain DSM 17595 / CGMCC 1.15422 / KT0803) (Gramella forsetii).